A 204-amino-acid chain; its full sequence is NADH-quinone oxidoreductase subunit C (204 aa).

The protein belongs to the complex I 30 kDa subunit family. As to quaternary structure, NDH-1 is composed of 14 different subunits. Subunits NuoB, C, D, E, F, and G constitute the peripheral sector of the complex.

It localises to the cell inner membrane. The enzyme catalyses a quinone + NADH + 5 H(+)(in) = a quinol + NAD(+) + 4 H(+)(out). NDH-1 shuttles electrons from NADH, via FMN and iron-sulfur (Fe-S) centers, to quinones in the respiratory chain. The immediate electron acceptor for the enzyme in this species is believed to be ubiquinone. Couples the redox reaction to proton translocation (for every two electrons transferred, four hydrogen ions are translocated across the cytoplasmic membrane), and thus conserves the redox energy in a proton gradient. The chain is NADH-quinone oxidoreductase subunit C from Vesicomyosocius okutanii subsp. Calyptogena okutanii (strain HA).